The following is a 556-amino-acid chain: 2-succinyl-5-enolpyruvyl-6-hydroxy-3-cyclohexene-1-carboxylate synthase (556 aa).

Belongs to the TPP enzyme family. MenD subfamily. As to quaternary structure, homodimer. It depends on Mg(2+) as a cofactor. Mn(2+) is required as a cofactor. Requires thiamine diphosphate as cofactor.

The catalysed reaction is isochorismate + 2-oxoglutarate + H(+) = 5-enolpyruvoyl-6-hydroxy-2-succinyl-cyclohex-3-ene-1-carboxylate + CO2. The protein operates within quinol/quinone metabolism; 1,4-dihydroxy-2-naphthoate biosynthesis; 1,4-dihydroxy-2-naphthoate from chorismate: step 2/7. It functions in the pathway quinol/quinone metabolism; menaquinone biosynthesis. Functionally, catalyzes the thiamine diphosphate-dependent decarboxylation of 2-oxoglutarate and the subsequent addition of the resulting succinic semialdehyde-thiamine pyrophosphate anion to isochorismate to yield 2-succinyl-5-enolpyruvyl-6-hydroxy-3-cyclohexene-1-carboxylate (SEPHCHC). This Shigella sonnei (strain Ss046) protein is 2-succinyl-5-enolpyruvyl-6-hydroxy-3-cyclohexene-1-carboxylate synthase.